The following is a 361-amino-acid chain: UPF0283 membrane protein Smed_1530 (361 aa).

Residues 1-40 (MNDDSNGRRRRPAAFPVGTEDATSRELEQTPRRAPGSFSD) are disordered. The segment covering 22–31 (ATSRELEQTP) has biased composition (basic and acidic residues). 2 helical membrane-spanning segments follow: residues 76–96 (FGKIAAGAFGILISLAVGLWV) and 109–129 (WLGYGAVAVVAIGAAAFLIVV).

Belongs to the UPF0283 family.

It is found in the cell inner membrane. The chain is UPF0283 membrane protein Smed_1530 from Sinorhizobium medicae (strain WSM419) (Ensifer medicae).